We begin with the raw amino-acid sequence, 230 residues long: Leucyl/phenylalanyl-tRNA--protein transferase (230 aa).

This sequence belongs to the L/F-transferase family.

The protein resides in the cytoplasm. It carries out the reaction N-terminal L-lysyl-[protein] + L-leucyl-tRNA(Leu) = N-terminal L-leucyl-L-lysyl-[protein] + tRNA(Leu) + H(+). It catalyses the reaction N-terminal L-arginyl-[protein] + L-leucyl-tRNA(Leu) = N-terminal L-leucyl-L-arginyl-[protein] + tRNA(Leu) + H(+). The enzyme catalyses L-phenylalanyl-tRNA(Phe) + an N-terminal L-alpha-aminoacyl-[protein] = an N-terminal L-phenylalanyl-L-alpha-aminoacyl-[protein] + tRNA(Phe). In terms of biological role, functions in the N-end rule pathway of protein degradation where it conjugates Leu, Phe and, less efficiently, Met from aminoacyl-tRNAs to the N-termini of proteins containing an N-terminal arginine or lysine. The sequence is that of Leucyl/phenylalanyl-tRNA--protein transferase from Erwinia tasmaniensis (strain DSM 17950 / CFBP 7177 / CIP 109463 / NCPPB 4357 / Et1/99).